Consider the following 163-residue polypeptide: Protein-export protein SecB (163 aa).

Belongs to the SecB family. As to quaternary structure, homotetramer, a dimer of dimers. One homotetramer interacts with 1 SecA dimer.

The protein localises to the cytoplasm. Functionally, one of the proteins required for the normal export of preproteins out of the cell cytoplasm. It is a molecular chaperone that binds to a subset of precursor proteins, maintaining them in a translocation-competent state. It also specifically binds to its receptor SecA. In Caulobacter vibrioides (strain ATCC 19089 / CIP 103742 / CB 15) (Caulobacter crescentus), this protein is Protein-export protein SecB.